The primary structure comprises 617 residues: V-type proton ATPase catalytic subunit A (617 aa).

A Phosphothreonine modification is found at Thr-136. Gly-250–Thr-257 serves as a coordination point for ATP. At Ser-384 the chain carries Phosphoserine; by AMPK.

Belongs to the ATPase alpha/beta chains family. As to quaternary structure, V-ATPase is a heteromultimeric enzyme made up of two complexes: the ATP-hydrolytic V1 complex and the proton translocation V0 complex. The V1 complex consists of three catalytic AB heterodimers that form a heterohexamer, three peripheral stalks each consisting of EG heterodimers, one central rotor including subunits D and F, and the regulatory subunits C and H. The proton translocation complex V0 consists of the proton transport subunit a, a ring of proteolipid subunits c9c'', rotary subunit d, subunits e and f, and the accessory subunits ATP6AP1/Ac45 and ATP6AP2/PRR. Interacts with the V0 complex V-ATPase subunit a4 ATP6V0A4. Interacts with WFS1. Interacts with alpha-crystallin B chain/CRYAB and with MTOR, forming a ternary complex. Post-translationally, phosphorylation at Ser-384 by AMPK down-regulates its enzyme activity. In terms of tissue distribution, expressed in brain (at protein level).

The protein localises to the cytoplasm. Its subcellular location is the cytosol. It is found in the cytoplasmic vesicle. It localises to the secretory vesicle. The protein resides in the clathrin-coated vesicle membrane. The protein localises to the lysosome. It catalyses the reaction ATP + H2O + 4 H(+)(in) = ADP + phosphate + 5 H(+)(out). Its activity is regulated as follows. ATP hydrolysis occurs at the interface between the nucleotide-binding domains of subunits A and B. ATP hydrolysis triggers a conformational change in the subunits D and F, which induces a shift of subunit d. The c-ring is subsequently rotated and results in a continuous proton translocation across the membrane. The V-ATPase is inhibited by bafilomycin A. In terms of biological role, catalytic subunit of the V1 complex of vacuolar(H+)-ATPase (V-ATPase), a multisubunit enzyme composed of a peripheral complex (V1) that hydrolyzes ATP and a membrane integral complex (V0) that translocates protons. V-ATPase is responsible for acidifying and maintaining the pH of intracellular compartments and in some cell types, is targeted to the plasma membrane, where it is responsible for acidifying the extracellular environment. In aerobic conditions, involved in intracellular iron homeostasis, thus triggering the activity of Fe(2+) prolyl hydroxylase (PHD) enzymes, and leading to HIF1A hydroxylation and subsequent proteasomal degradation. May play a role in neurite development and synaptic connectivity. This Bos taurus (Bovine) protein is V-type proton ATPase catalytic subunit A (ATP6V1A).